A 393-amino-acid polypeptide reads, in one-letter code: 1-deoxy-D-xylulose 5-phosphate reductoisomerase (393 aa).

NADPH-binding residues include T16, G17, S18, I19, A42, R43, N44, and N127. 1-deoxy-D-xylulose 5-phosphate is bound at residue K128. NADPH is bound at residue E129. Mn(2+) is bound at residue D153. Positions 154, 155, 179, and 202 each coordinate 1-deoxy-D-xylulose 5-phosphate. Residue E155 participates in Mn(2+) binding. NADPH is bound at residue G208. The 1-deoxy-D-xylulose 5-phosphate site is built by S215, N220, K221, and E224. E224 provides a ligand contact to Mn(2+).

This sequence belongs to the DXR family. Mg(2+) is required as a cofactor. Mn(2+) serves as cofactor.

The enzyme catalyses 2-C-methyl-D-erythritol 4-phosphate + NADP(+) = 1-deoxy-D-xylulose 5-phosphate + NADPH + H(+). Its pathway is isoprenoid biosynthesis; isopentenyl diphosphate biosynthesis via DXP pathway; isopentenyl diphosphate from 1-deoxy-D-xylulose 5-phosphate: step 1/6. Its function is as follows. Catalyzes the NADPH-dependent rearrangement and reduction of 1-deoxy-D-xylulose-5-phosphate (DXP) to 2-C-methyl-D-erythritol 4-phosphate (MEP). The sequence is that of 1-deoxy-D-xylulose 5-phosphate reductoisomerase from Jannaschia sp. (strain CCS1).